The following is a 126-amino-acid chain: S-adenosylmethionine decarboxylase proenzyme (126 aa).

Residue S63 is the Schiff-base intermediate with substrate; via pyruvic acid of the active site. A Pyruvic acid (Ser); by autocatalysis modification is found at S63. H68 functions as the Proton acceptor; for processing activity in the catalytic mechanism. C83 serves as the catalytic Proton donor; for catalytic activity.

The protein belongs to the prokaryotic AdoMetDC family. Type 1 subfamily. As to quaternary structure, heterotetramer of two alpha and two beta chains arranged as a dimer of alpha/beta heterodimers. Pyruvate is required as a cofactor. Is synthesized initially as an inactive proenzyme. Formation of the active enzyme involves a self-maturation process in which the active site pyruvoyl group is generated from an internal serine residue via an autocatalytic post-translational modification. Two non-identical subunits are generated from the proenzyme in this reaction, and the pyruvate is formed at the N-terminus of the alpha chain, which is derived from the carboxyl end of the proenzyme. The post-translation cleavage follows an unusual pathway, termed non-hydrolytic serinolysis, in which the side chain hydroxyl group of the serine supplies its oxygen atom to form the C-terminus of the beta chain, while the remainder of the serine residue undergoes an oxidative deamination to produce ammonia and the pyruvoyl group blocking the N-terminus of the alpha chain.

It carries out the reaction S-adenosyl-L-methionine + H(+) = S-adenosyl 3-(methylsulfanyl)propylamine + CO2. It functions in the pathway amine and polyamine biosynthesis; S-adenosylmethioninamine biosynthesis; S-adenosylmethioninamine from S-adenosyl-L-methionine: step 1/1. Functionally, catalyzes the decarboxylation of S-adenosylmethionine to S-adenosylmethioninamine (dcAdoMet), the propylamine donor required for the synthesis of the polyamines spermine and spermidine from the diamine putrescine. In Syntrophomonas wolfei subsp. wolfei (strain DSM 2245B / Goettingen), this protein is S-adenosylmethionine decarboxylase proenzyme.